The following is a 124-amino-acid chain: Alpha-amylase inhibitor 0.19 (124 aa).

5 cysteine pairs are disulfide-bonded: Cys6-Cys52, Cys20-Cys41, Cys28-Cys83, Cys42-Cys99, and Cys54-Cys115.

The protein belongs to the protease inhibitor I6 (cereal trypsin/alpha-amylase inhibitor) family. As to quaternary structure, homodimer. The disulfide bonds are essential for the inhibitor activity. As to expression, endosperm.

Its subcellular location is the secreted. Functionally, alpha-amylase inhibitor. This Triticum aestivum (Wheat) protein is Alpha-amylase inhibitor 0.19.